The sequence spans 59 residues: Large ribosomal subunit protein uL30 (59 aa).

The protein belongs to the universal ribosomal protein uL30 family. Part of the 50S ribosomal subunit.

This chain is Large ribosomal subunit protein uL30, found in Lactococcus lactis subsp. lactis (strain IL1403) (Streptococcus lactis).